The primary structure comprises 253 residues: Sulfate transporter CysZ (253 aa).

A run of 4 helical transmembrane segments spans residues 31–51 (FVILPLLVNILLMGGAFWWLF), 75–95 (LLWPLAVISVLLVFGYFFSTI), 151–171 (IVLLILYFIPGIGQTVAPVLW), and 222–242 (IPLLNLFIMPVAVCGATAMWV).

The protein belongs to the CysZ family.

It localises to the cell inner membrane. High affinity, high specificity proton-dependent sulfate transporter, which mediates sulfate uptake. Provides the sulfur source for the cysteine synthesis pathway. The protein is Sulfate transporter CysZ of Escherichia coli O127:H6 (strain E2348/69 / EPEC).